Here is a 347-residue protein sequence, read N- to C-terminus: Transcription factor JunD (347 aa).

Positions 1–46 (METPFYGDEALSGLGGGGSSSGGGGSFASPGRLFPGAPPTAAPGSM) are disordered. Positions 13–26 (GLGGGGSSSGGGGS) are enriched in gly residues. Positions 29–41 (SPGRLFPGAPPTA) match the Menin-binding motif (MBM) motif. Positions 48 to 57 (KKDALTLSLS) match the MAP kinase docking motif; essential for its phosphorylation motif. The interval 63 to 91 (ALKPAAAPPPGPLRTDGAPGTAPPDGLLA) is disordered. Ser-92 is modified (phosphoserine). Ser-102 carries the post-translational modification Phosphoserine; by MAPK8. Residue Thr-119 is modified to Phosphothreonine. Disordered regions lie at residues 164-183 (AAAGGPSGTAAGAAPPSELA) and 218-264 (EPVP…IDMD). Over residues 220-231 (VPFPPPPPPGTL) the composition is skewed to pro residues. Residues Ser-251, Ser-255, and Ser-259 each carry the phosphoserine modification. Residues 268–295 (RIKAERKRLRNRIAASKCRKRKLERISR) are basic motif. A bZIP domain is found at 268–331 (RIKAERKRLR…AQLKQKVLSH (64 aa)). Residues 296–324 (LEEKVKTLKSQNTELASTASLLREQVAQL) are leucine-zipper.

It belongs to the bZIP family. Jun subfamily. In terms of assembly, heterodimer; binds DNA as a heterodimer. Component of an AP-1 transcription factor complex composed of JUN-FOS heterodimers. As part of the AP-1 transcription factor complex, forms heterodimers with FOS proteins, thereby binding to the AP-1 consensus sequence and stimulating transcription. Forms heterodimers with FOSB; thereby binding to the AP-1 consensus sequence. Interacts (via MBM motif) with MEN1; this interaction represses transcriptional activation. Interacts with MAPK10; this interaction is inhibited in the presence of MEN1. Phosphorylated by MAP kinases MAPK8 and MAPK10; phosphorylation is inhibited in the presence of MEN1.

The protein resides in the nucleus. Functionally, transcription factor binding AP-1 sites. Heterodimerizes with proteins of the FOS family to form an AP-1 transcription factor complex, thereby enhancing their DNA binding activity to an AP-1 consensus sequence 3'-TGA[GC]TCA-5' and enhancing their transcriptional activity. The chain is Transcription factor JunD (JUND) from Bos taurus (Bovine).